The primary structure comprises 1621 residues: ALK tyrosine kinase receptor (1621 aa).

An N-terminal signal peptide occupies residues Met-1–Ala-18. The Extracellular segment spans residues Ser-19 to Ser-1042. The interval Arg-48–Asp-70 is heparin-binding region. N-linked (GlcNAc...) asparagine glycosylation is found at Asn-174, Asn-248, Asn-289, Asn-328, Asn-415, Asn-428, Asn-449, Asn-567, Asn-575, Asn-631, and Asn-673. Residues Leu-268–Glu-431 enclose the MAM 1 domain. The LDL-receptor class A domain maps to Leu-441–Lys-477. One can recognise an MAM 2 domain in the interval Phe-482–Leu-640. Residues Cys-692 and Cys-705 are joined by a disulfide bond. An N-linked (GlcNAc...) asparagine glycan is attached at Asn-713. The cysteines at positions 787 and 798 are disulfide-linked. Residues Asn-812, Asn-868, and Asn-890 are each glycosylated (N-linked (GlcNAc...) asparagine). Residues Cys-910 and Cys-932 are joined by a disulfide bond. The N-linked (GlcNAc...) asparagine glycan is linked to Asn-990. Disulfide bonds link Cys-991/Cys-999, Cys-994/Cys-1010, and Cys-1012/Cys-1025. The interval Cys-991–Pro-1029 is EGF-like. The helical transmembrane segment at Val-1043 to Tyr-1063 threads the bilayer. Residues Arg-1064–Pro-1621 are Cytoplasmic-facing. Tyr-1082, Tyr-1096, and Tyr-1100 each carry phosphotyrosine. In terms of domain architecture, Protein kinase spans Ile-1120–Val-1396. ATP is bound by residues Leu-1126–Val-1134 and His-1128. Phosphotyrosine is present on Tyr-1135. ATP contacts are provided by residues Lys-1154 and Glu-1201–Met-1203. Asp-1253 functions as the Proton acceptor in the catalytic mechanism. Asp-1274 contacts ATP. Phosphotyrosine is present on Tyr-1282. A disordered region spans residues Glu-1412–Arg-1556. Residues Lys-1414 to Glu-1423 are compositionally biased toward basic and acidic residues. A compositionally biased stretch (low complexity) spans Ser-1441–Gly-1461. Residues Ala-1462 to Ala-1472 are compositionally biased toward gly residues. Residues Asn-1506 to Ser-1518 show a composition bias toward polar residues. Tyr-1516 is modified (phosphotyrosine). The span at Ala-1543–Ala-1552 shows a compositional bias: gly residues.

Belongs to the protein kinase superfamily. Tyr protein kinase family. Insulin receptor subfamily. As to quaternary structure, homodimer; homodimerizes following heparin- and ligand-binding. Interacts with CBL, IRS1, PIK3R1 and PLCG1. Interacts with FRS2 and SHC1. Interacts with PTN and MDK. In terms of processing, phosphorylated at tyrosine residues by autocatalysis, which activates kinase activity. In cells not stimulated by a ligand, receptor protein tyrosine phosphatase beta and zeta complex (PTPRB/PTPRZ1) dephosphorylates ALK at the sites in ALK that are undergoing autophosphorylation through autoactivation. As to expression, mainly expressed in central nervous system (CNS) and other parts of the brain such as the paraventricular nucleus (PVN) of the hypothalamus. Expression is also found in peripheral nervous systems, eye, nasal epithelium, olfactory nerve, tongue, skin, tissue surrounding the esophagus, stomach, midgut, as well as testis and ovary.

It localises to the cell membrane. It carries out the reaction L-tyrosyl-[protein] + ATP = O-phospho-L-tyrosyl-[protein] + ADP + H(+). Its activity is regulated as follows. Activated upon ALKAL2 ligand-binding. ALKAL2-driven activation is coupled with heparin-binding. Following ligand-binding, homodimerizes and autophosphorylates, activating its kinase activity. Inactivated through dephosphorylation by receptor protein tyrosine phosphatase beta and zeta complex (PTPRB/PTPRZ1) when there is no stimulation by a ligand. Its function is as follows. Neuronal receptor tyrosine kinase that is essentially and transiently expressed in specific regions of the central and peripheral nervous systems and plays an important role in the genesis and differentiation of the nervous system. Also acts as a key thinness protein involved in the resistance to weight gain: in hypothalamic neurons, controls energy expenditure acting as a negative regulator of white adipose tissue lipolysis and sympathetic tone to fine-tune energy homeostasis. Following activation by ALKAL2 ligand at the cell surface, transduces an extracellular signal into an intracellular response. In contrast, ALKAL1 is not a potent physiological ligand for ALK. Ligand-binding to the extracellular domain induces tyrosine kinase activation, leading to activation of the mitogen-activated protein kinase (MAPK) pathway. Phosphorylates almost exclusively at the first tyrosine of the Y-x-x-x-Y-Y motif. Induces tyrosine phosphorylation of CBL, FRS2, IRS1 and SHC1, as well as of the MAP kinases MAPK1/ERK2 and MAPK3/ERK1. ALK activation may also be regulated by pleiotrophin (PTN) and midkine (MDK). PTN-binding induces MAPK pathway activation, which is important for the anti-apoptotic signaling of PTN and regulation of cell proliferation. MDK-binding induces phosphorylation of the ALK target insulin receptor substrate (IRS1), activates mitogen-activated protein kinases (MAPKs) and PI3-kinase, resulting also in cell proliferation induction. Drives NF-kappa-B activation, probably through IRS1 and the activation of the AKT serine/threonine kinase. Recruitment of IRS1 to activated ALK and the activation of NF-kappa-B are essential for the autocrine growth and survival signaling of MDK. This Mus musculus (Mouse) protein is ALK tyrosine kinase receptor.